The chain runs to 184 residues: ATP synthase subunit b, chloroplastic (184 aa).

A helical transmembrane segment spans residues 27 to 49 (LATNPINLSVVFGVLIFFGKGVL).

It belongs to the ATPase B chain family. In terms of assembly, F-type ATPases have 2 components, F(1) - the catalytic core - and F(0) - the membrane proton channel. F(1) has five subunits: alpha(3), beta(3), gamma(1), delta(1), epsilon(1). F(0) has four main subunits: a(1), b(1), b'(1) and c(10-14). The alpha and beta chains form an alternating ring which encloses part of the gamma chain. F(1) is attached to F(0) by a central stalk formed by the gamma and epsilon chains, while a peripheral stalk is formed by the delta, b and b' chains.

Its subcellular location is the plastid. It is found in the chloroplast thylakoid membrane. F(1)F(0) ATP synthase produces ATP from ADP in the presence of a proton or sodium gradient. F-type ATPases consist of two structural domains, F(1) containing the extramembraneous catalytic core and F(0) containing the membrane proton channel, linked together by a central stalk and a peripheral stalk. During catalysis, ATP synthesis in the catalytic domain of F(1) is coupled via a rotary mechanism of the central stalk subunits to proton translocation. In terms of biological role, component of the F(0) channel, it forms part of the peripheral stalk, linking F(1) to F(0). The polypeptide is ATP synthase subunit b, chloroplastic (Nasturtium officinale (Watercress)).